A 122-amino-acid polypeptide reads, in one-letter code: Large ribosomal subunit protein uL14 (122 aa).

This sequence belongs to the universal ribosomal protein uL14 family. Part of the 50S ribosomal subunit. Forms a cluster with proteins L3 and L19. In the 70S ribosome, L14 and L19 interact and together make contacts with the 16S rRNA in bridges B5 and B8.

Its function is as follows. Binds to 23S rRNA. Forms part of two intersubunit bridges in the 70S ribosome. This Mycobacterium tuberculosis (strain ATCC 25177 / H37Ra) protein is Large ribosomal subunit protein uL14.